The chain runs to 158 residues: Transcriptional repressor NrdR (158 aa).

A zinc finger spans residues 3 to 34; the sequence is CPSCQNTDSRVLESRAADAGRSVRRRRECLHC. The ATP-cone domain occupies 49–139; the sequence is ITVLKRNGNR…VYRHFRGIND (91 aa).

This sequence belongs to the NrdR family. Requires Zn(2+) as cofactor.

In terms of biological role, negatively regulates transcription of bacterial ribonucleotide reductase nrd genes and operons by binding to NrdR-boxes. The protein is Transcriptional repressor NrdR of Prochlorococcus marinus (strain MIT 9303).